The sequence spans 443 residues: MGHRGKRKPLPAEPIAAHIESFAHDGKGIAHVDGRVVFVDGALPGEDVTFVYTEIKRDYAAGRVVEIVTASPDRVPARCRHFALCGGCSLQYLSEDAQIALKEDLLLDQFRRIGKVEPAAQFPPLRGPHWGYRSRARLGARYVAKKGRELVGFREHASAKIVDMTDCPVLHPALGERIQAFAELIEGLSLRERLPQIEAAVGEERTALVFRVLEDPTAEDFARLARFGKDQGLDVYIQREGRDSVAPVYPETAHDLSYSLPEWEVTFRFGPLDFTQVNMAINRQMIDQVMQALDPQPEERVLDLFCGLGNFTLPLARRAGHVTGVEGGAEAVARAIRNAADNGIGNVEFHVADLSKPESCGSWAGREYHKVLLDPSRSGALEILQCVPNWKAGRIVYVSCNPSTLARDAGILVHEYGYRLLKAGVMDMFPHTAHVESIAVFER.

One can recognise a TRAM domain in the interval 8–66 (KPLPAEPIAAHIESFAHDGKGIAHVDGRVVFVDGALPGEDVTFVYTEIKRDYAAGRVVE). [4Fe-4S] cluster is bound by residues cysteine 79, cysteine 85, cysteine 88, and cysteine 167. S-adenosyl-L-methionine-binding residues include glutamine 276, phenylalanine 305, asparagine 310, glutamate 326, aspartate 353, and aspartate 374. Cysteine 400 serves as the catalytic Nucleophile.

This sequence belongs to the class I-like SAM-binding methyltransferase superfamily. RNA M5U methyltransferase family. RlmD subfamily.

The catalysed reaction is uridine(1939) in 23S rRNA + S-adenosyl-L-methionine = 5-methyluridine(1939) in 23S rRNA + S-adenosyl-L-homocysteine + H(+). In terms of biological role, catalyzes the formation of 5-methyl-uridine at position 1939 (m5U1939) in 23S rRNA. In Methylococcus capsulatus (strain ATCC 33009 / NCIMB 11132 / Bath), this protein is 23S rRNA (uracil(1939)-C(5))-methyltransferase RlmD.